A 349-amino-acid polypeptide reads, in one-letter code: 11-beta-hydroxysteroid dehydrogenase 1A (349 aa).

A helical; Signal-anchor for type II membrane protein membrane pass occupies residues 10 to 30 (LTAPFFTFFGLCFFLPPFYFF). Residues 54–80 (GASSGIGEQLAYEYACRGACLALTARR) and Asp105 each bind NADP(+). Residue Ser184 participates in substrate binding. The Proton acceptor role is filled by Tyr197. Residues 197-201 (YNASK) and Lys201 each bind NADP(+).

The protein belongs to the short-chain dehydrogenases/reductases (SDR) family. Expressed in the above-ground part of seedlings, especially in the vascular tissues. Also detected in the buds and silique pedicels. Highly induced in oil-accumulating tissues of maturing seeds.

It is found in the lipid droplet. The protein resides in the membrane. It carries out the reaction an 11beta-hydroxysteroid + NADP(+) = an 11-oxosteroid + NADPH + H(+). The enzyme catalyses 17beta-estradiol + NADP(+) = estrone + NADPH + H(+). It catalyses the reaction corticosterone + NADP(+) = 11-dehydrocorticosterone + NADPH + H(+). The catalysed reaction is cortisone + NADPH + H(+) = cortisol + NADP(+). Functionally, catalyzes 11-beta, 17-beta-hydroxysteroid and reduces 17-beta-ketosteroids. Involved in regulating plant growth and development, probably promoting or mediating brassinosteroid effects. Plays a role during seed maturation. This is 11-beta-hydroxysteroid dehydrogenase 1A (HSD1) from Arabidopsis thaliana (Mouse-ear cress).